Consider the following 195-residue polypeptide: MADPVRLIVGLGNPGREYEDTRHNAGVWYVDALARRQGVFLTEDKKYFGLTATFSFEGETIRLLVPTTFMNRSGQATAALANFFKIPVTQILVAHDELDLPPGCARFKQGGGHGGHNGLRDIISRHGNSRDFYRLRLGIGHPGSADRVTPHVLSKPSKADRDLIDRAIDEAVHNTADMLRGDLNSAMNRLNGFKA.

Residue tyrosine 18 coordinates tRNA. Histidine 23 functions as the Proton acceptor in the catalytic mechanism. The tRNA site is built by phenylalanine 69, asparagine 71, and asparagine 117.

The protein belongs to the PTH family. As to quaternary structure, monomer.

It is found in the cytoplasm. It carries out the reaction an N-acyl-L-alpha-aminoacyl-tRNA + H2O = an N-acyl-L-amino acid + a tRNA + H(+). Functionally, hydrolyzes ribosome-free peptidyl-tRNAs (with 1 or more amino acids incorporated), which drop off the ribosome during protein synthesis, or as a result of ribosome stalling. Its function is as follows. Catalyzes the release of premature peptidyl moieties from peptidyl-tRNA molecules trapped in stalled 50S ribosomal subunits, and thus maintains levels of free tRNAs and 50S ribosomes. This chain is Peptidyl-tRNA hydrolase, found in Alcanivorax borkumensis (strain ATCC 700651 / DSM 11573 / NCIMB 13689 / SK2).